Reading from the N-terminus, the 758-residue chain is Spastin (758 aa).

The tract at residues 1–99 (MVRTKNQSSS…PTTCSPRSGH (99 aa)) is disordered. Residues 1 to 121 (MVRTKNQSSS…KQNLYVVSFP (121 aa)) lie on the Cytoplasmic side of the membrane. Positions 1–210 (MVRTKNQSSS…RPIQPLEMAA (210 aa)) are required for localization to punctate cytoplasmic foci. Low complexity-rich tracts occupy residues 8-28 (SSSSSASSSSTKSPIKSSSGA), 43-58 (RSSSASNVAAVVAGGS), 66-76 (SSNRRSPGSSP), and 85-95 (TDDLTPTTCSP). Residues 122–142 (IIFLFNVLRSLIYQLFCIFRY) constitute an intramembrane region (helical). The Cytoplasmic portion of the chain corresponds to 143 to 758 (LYGASTKVIY…WSQDYGDITI (616 aa)). Composition is skewed to polar residues over residues 169 to 180 (SKEQQQSLNHPS) and 189 to 198 (QEQQLSNQPQ). Positions 169–203 (SKEQQQSLNHPSELSREGDGQEQQLSNQPQRFRPI) are disordered. Residues 208–758 (MAANRPGGGY…WSQDYGDITI (551 aa)) are sufficient for interaction with microtubules and microtubule severing. In terms of domain architecture, MIT spans 233-308 (HRRAFEYISK…SMARDRLHFL (76 aa)). Disordered regions lie at residues 353–375 (RVRSSGYGPKATTSAQPTASGRK) and 390–454 (NKSQ…ASTP). 2 stretches are compositionally biased toward polar residues: residues 390-406 (NKSQTLPRNLGSKTSVG) and 425-454 (QFSSGRNTPPQRSRTPINNNGPSGSGASTP). Residues 443–455 (NNGPSGSGASTPV) are required for interaction with microtubules. Position 523-530 (523-530 (GPPGNGKT)) interacts with ATP.

Belongs to the AAA ATPase family. Spastin subfamily. In terms of assembly, homohexamer. The homohexamer is stabilized by ATP-binding. The homohexamer may adopt a ring conformation through which microtubules pass prior to being severed. Interacts with microtubules. Interacts with atl; may be involved in microtubule dynamics.

Its subcellular location is the membrane. It is found in the cytoplasm. The protein resides in the cytoskeleton. It localises to the microtubule organizing center. The protein localises to the centrosome. Its subcellular location is the chromosome. It is found in the lipid droplet. The catalysed reaction is n ATP + n H2O + a microtubule = n ADP + n phosphate + (n+1) alpha/beta tubulin heterodimers.. Its function is as follows. ATP-dependent microtubule severing protein. Stimulates microtubule minus-end depolymerization and poleward microtubule flux in the mitotic spindle. Regulates microtubule stability in the neuromuscular junction synapse. Involved in lipid metabolism by regulating the size and distribution of lipid droplets. Involved in axon regeneration by regulating microtubule severing. In Drosophila erecta (Fruit fly), this protein is Spastin.